The following is a 303-amino-acid chain: Porphobilinogen deaminase (303 aa).

Cysteine 235 is modified (S-(dipyrrolylmethanemethyl)cysteine).

This sequence belongs to the HMBS family. As to quaternary structure, monomer. Requires dipyrromethane as cofactor.

It catalyses the reaction 4 porphobilinogen + H2O = hydroxymethylbilane + 4 NH4(+). The protein operates within porphyrin-containing compound metabolism; protoporphyrin-IX biosynthesis; coproporphyrinogen-III from 5-aminolevulinate: step 2/4. Functionally, tetrapolymerization of the monopyrrole PBG into the hydroxymethylbilane pre-uroporphyrinogen in several discrete steps. In Campylobacter fetus subsp. fetus (strain 82-40), this protein is Porphobilinogen deaminase.